The sequence spans 230 residues: Cytochrome c oxidase subunit 2 (230 aa).

Residues 1–14 (MAHPAQLGFQDAAS) lie on the Mitochondrial intermembrane side of the membrane. A helical transmembrane segment spans residues 15 to 45 (PVMEELLCFHDHALMIVFLISTLVLYIIIAM). At 46 to 59 (VSTKLTNKFILDSQ) the chain is on the mitochondrial matrix side. Residues 60 to 87 (EIEIVWTVLPAIILILIALPSLRILYLM) traverse the membrane as a helical segment. At 88–230 (DEINDPHVTI…NWSSAMLEDA (143 aa)) the chain is on the mitochondrial intermembrane side. The Cu cation site is built by H161, C196, E198, C200, H204, and M207. A Mg(2+)-binding site is contributed by E198.

It belongs to the cytochrome c oxidase subunit 2 family. In terms of assembly, component of the cytochrome c oxidase (complex IV, CIV), a multisubunit enzyme composed of 14 subunits. The complex is composed of a catalytic core of 3 subunits MT-CO1, MT-CO2 and MT-CO3, encoded in the mitochondrial DNA, and 11 supernumerary subunits COX4I, COX5A, COX5B, COX6A, COX6B, COX6C, COX7A, COX7B, COX7C, COX8 and NDUFA4, which are encoded in the nuclear genome. The complex exists as a monomer or a dimer and forms supercomplexes (SCs) in the inner mitochondrial membrane with NADH-ubiquinone oxidoreductase (complex I, CI) and ubiquinol-cytochrome c oxidoreductase (cytochrome b-c1 complex, complex III, CIII), resulting in different assemblies (supercomplex SCI(1)III(2)IV(1) and megacomplex MCI(2)III(2)IV(2)). Found in a complex with TMEM177, COA6, COX18, COX20, SCO1 and SCO2. Interacts with TMEM177 in a COX20-dependent manner. Interacts with COX20. Interacts with COX16. Requires Cu cation as cofactor.

The protein resides in the mitochondrion inner membrane. The enzyme catalyses 4 Fe(II)-[cytochrome c] + O2 + 8 H(+)(in) = 4 Fe(III)-[cytochrome c] + 2 H2O + 4 H(+)(out). Functionally, component of the cytochrome c oxidase, the last enzyme in the mitochondrial electron transport chain which drives oxidative phosphorylation. The respiratory chain contains 3 multisubunit complexes succinate dehydrogenase (complex II, CII), ubiquinol-cytochrome c oxidoreductase (cytochrome b-c1 complex, complex III, CIII) and cytochrome c oxidase (complex IV, CIV), that cooperate to transfer electrons derived from NADH and succinate to molecular oxygen, creating an electrochemical gradient over the inner membrane that drives transmembrane transport and the ATP synthase. Cytochrome c oxidase is the component of the respiratory chain that catalyzes the reduction of oxygen to water. Electrons originating from reduced cytochrome c in the intermembrane space (IMS) are transferred via the dinuclear copper A center (CU(A)) of subunit 2 and heme A of subunit 1 to the active site in subunit 1, a binuclear center (BNC) formed by heme A3 and copper B (CU(B)). The BNC reduces molecular oxygen to 2 water molecules using 4 electrons from cytochrome c in the IMS and 4 protons from the mitochondrial matrix. The protein is Cytochrome c oxidase subunit 2 (mt-co2) of Danio rerio (Zebrafish).